The primary structure comprises 175 residues: Large ribosomal subunit protein mL67 (175 aa).

This sequence belongs to the mitochondrion-specific ribosomal protein mL67 family. As to quaternary structure, component of the mitochondrial large ribosomal subunit (mt-LSU). Mature yeast 74S mitochondrial ribosomes consist of a small (37S) and a large (54S) subunit. The 37S small subunit contains a 15S ribosomal RNA (15S mt-rRNA) and at least 32 different proteins. The 54S large subunit contains a 21S rRNA (21S mt-rRNA) and at least 45 different proteins.

The protein localises to the mitochondrion. Functionally, component of the mitochondrial ribosome (mitoribosome), a dedicated translation machinery responsible for the synthesis of mitochondrial genome-encoded proteins, including at least some of the essential transmembrane subunits of the mitochondrial respiratory chain. The mitoribosomes are attached to the mitochondrial inner membrane and translation products are cotranslationally integrated into the membrane. mL67/mhr1 also has extraribosomal functions, being involved in regulation of mitochondrial DNA recombination, maintenance and repair, and generation of homoplasmic cells. mL67/mhr1 also acts as transcription factor involved in regulation of RNA polymerase II-dependent transcription. This chain is Large ribosomal subunit protein mL67 (mhr1), found in Schizosaccharomyces pombe (strain 972 / ATCC 24843) (Fission yeast).